We begin with the raw amino-acid sequence, 349 residues long: Homeobox-leucine zipper protein HOX7 (349 aa).

Positions 42–186 (RATRRDEQDD…PKQKSDLANR (145 aa)) are disordered. Composition is skewed to polar residues over residues 89-99 (SAETGSANSEM) and 121-135 (SSPS…RQQV). Residues 150 to 209 (GARKKLRLSKEQSSFLEDSFKEHSTLTPKQKSDLANRLNLRPRQVEVWFQNRRARTKLKQ) constitute a DNA-binding region (homeobox). The span at 167–183 (DSFKEHSTLTPKQKSDL) shows a compositional bias: basic and acidic residues. Residues 208 to 252 (KQTEVDCEHLKRCCERLTRENRRLQREVAELRGTLRTTTSSYPPL) form a leucine-zipper region.

The protein belongs to the HD-ZIP homeobox family. Class II subfamily. As to quaternary structure, homodimer. May form a heterodimer with HOX1, HOX2 or HOX3. In terms of tissue distribution, expressed in seedlings, roots, leaves, nodes, internodes, flowers and embryo.

The protein resides in the nucleus. Probable transcription factor that binds to the DNA sequence 5'-CAAT[GC]ATTG-3'. The polypeptide is Homeobox-leucine zipper protein HOX7 (HOX7) (Oryza sativa subsp. japonica (Rice)).